A 316-amino-acid chain; its full sequence is ATP synthase gamma chain (316 aa).

The protein belongs to the ATPase gamma chain family. As to quaternary structure, F-type ATPases have 2 components, CF(1) - the catalytic core - and CF(0) - the membrane proton channel. CF(1) has five subunits: alpha(3), beta(3), gamma(1), delta(1), epsilon(1). CF(0) has three main subunits: a, b and c.

The protein localises to the cellular thylakoid membrane. Produces ATP from ADP in the presence of a proton gradient across the membrane. The gamma chain is believed to be important in regulating ATPase activity and the flow of protons through the CF(0) complex. This Prochlorococcus marinus (strain MIT 9515) protein is ATP synthase gamma chain.